The following is a 411-amino-acid chain: Secretion apparatus protein BsaZ (411 aa).

The next 4 helical transmembrane spans lie at 28-48 (IVAL…VDLT), 80-100 (IAAP…LVQS), 137-157 (ALLY…LYHA), and 175-195 (IVLT…VLIL). Residues 341 to 411 (AANRGGPPPE…APARTGDQNA (71 aa)) form a disordered region. The span at 370-404 (DACADNAFPDDAPPGAAAPNAGSPDSPAPDGGAPA) shows a compositional bias: low complexity.

The protein belongs to the type III secretion exporter family.

The protein localises to the cell membrane. Its function is as follows. Part of the bsa type III secretion system, is involved in the intracellular replication of invading bacteria inside the host cell. Probably necessary for the lysis of the vacuole membrane and escape into the host cell cytoplasm. The protein is Secretion apparatus protein BsaZ (bsaZ) of Burkholderia pseudomallei (strain 1106a).